The following is a 461-amino-acid chain: Diaboline synthase (461 aa).

Catalysis depends on proton acceptor residues H185 and D400.

The protein belongs to the plant acyltransferase family. As to quaternary structure, monomer.

The protein localises to the cytoplasm. The catalysed reaction is 17,18-epoxy-17-hydroxycur-19-ene + acetyl-CoA = diaboline + CoA. Its pathway is alkaloid biosynthesis. In terms of biological role, acetyltransferase involved in the biosynthesis of curare monoterpene indole alkaloids (MIAs), natural products such as diaboline, a pharmacologically active compound used to regulate blood pressure. Curare alkaloids act as animal glycine receptor antagonists. Catalyzes the conversion of 17,18-epoxy-17-hydroxycur-19-ene (Wieland-Gumlich aldehyde) to diaboline. This Strychnos sp protein is Diaboline synthase.